Consider the following 607-residue polypeptide: ENTH domain-containing protein 1 (607 aa).

Residues 9–141 (NFVKNYSDAE…MDEPLLCKER (133 aa)) enclose the ENTH domain. Positions 543-574 (EAKNSISVLLREVKRAIARLHEDLSTVIQELN) form a coiled coil.

The protein is ENTH domain-containing protein 1 (ENTHD1) of Homo sapiens (Human).